The primary structure comprises 461 residues: Asparagine--tRNA ligase (461 aa).

This sequence belongs to the class-II aminoacyl-tRNA synthetase family. As to quaternary structure, homodimer.

It localises to the cytoplasm. It carries out the reaction tRNA(Asn) + L-asparagine + ATP = L-asparaginyl-tRNA(Asn) + AMP + diphosphate + H(+). The protein is Asparagine--tRNA ligase of Nitratidesulfovibrio vulgaris (strain ATCC 29579 / DSM 644 / CCUG 34227 / NCIMB 8303 / VKM B-1760 / Hildenborough) (Desulfovibrio vulgaris).